A 295-amino-acid chain; its full sequence is Protoheme IX farnesyltransferase (295 aa).

Transmembrane regions (helical) follow at residues 27 to 47, 48 to 68, 94 to 114, 117 to 137, 144 to 164, 171 to 191, 216 to 236, 241 to 261, and 272 to 292; these read LVVF…HPFL, ALIS…INMW, SALE…AIAV, ISAA…TIWL, NIVI…AVVT, SFIL…ALSL, KHIL…ALFL, FYLS…ISVI, and MFSY…FCSI.

Belongs to the UbiA prenyltransferase family. Protoheme IX farnesyltransferase subfamily.

The protein resides in the cell membrane. The enzyme catalyses heme b + (2E,6E)-farnesyl diphosphate + H2O = Fe(II)-heme o + diphosphate. The protein operates within porphyrin-containing compound metabolism; heme O biosynthesis; heme O from protoheme: step 1/1. In terms of biological role, converts heme B (protoheme IX) to heme O by substitution of the vinyl group on carbon 2 of heme B porphyrin ring with a hydroxyethyl farnesyl side group. The chain is Protoheme IX farnesyltransferase from Wolbachia pipientis subsp. Culex pipiens (strain wPip).